The sequence spans 265 residues: Tryptophan synthase alpha chain (265 aa).

Active-site proton acceptor residues include glutamate 50 and aspartate 61.

The protein belongs to the TrpA family. Tetramer of two alpha and two beta chains.

It carries out the reaction (1S,2R)-1-C-(indol-3-yl)glycerol 3-phosphate + L-serine = D-glyceraldehyde 3-phosphate + L-tryptophan + H2O. It participates in amino-acid biosynthesis; L-tryptophan biosynthesis; L-tryptophan from chorismate: step 5/5. Its function is as follows. The alpha subunit is responsible for the aldol cleavage of indoleglycerol phosphate to indole and glyceraldehyde 3-phosphate. The chain is Tryptophan synthase alpha chain from Trichodesmium erythraeum (strain IMS101).